A 137-amino-acid chain; its full sequence is Fluoride-specific ion channel FluC 1 (137 aa).

4 consecutive transmembrane segments (helical) span residues 4–24 (LIYI…YYLG), 37–57 (LATL…TTYI), 67–87 (VITG…TLSV), and 98–118 (WGIA…MSGL). 2 residues coordinate Na(+): Gly-77 and Thr-80.

Belongs to the fluoride channel Fluc/FEX (TC 1.A.43) family.

The protein resides in the cell membrane. The catalysed reaction is fluoride(in) = fluoride(out). With respect to regulation, na(+) is not transported, but it plays an essential structural role and its presence is essential for fluoride channel function. Its function is as follows. Fluoride-specific ion channel. Important for reducing fluoride concentration in the cell, thus reducing its toxicity. The sequence is that of Fluoride-specific ion channel FluC 1 from Bacillus anthracis.